Reading from the N-terminus, the 559-residue chain is Pentatricopeptide repeat-containing protein At4g38010 (559 aa).

PPR repeat units lie at residues Ser-70–Pro-104, Asp-105–Asp-139, Asp-140–Arg-170, Asp-171–Glu-201, Asn-203–Arg-233, Ser-238–Lys-268, Asp-269–Pro-304, Asp-305–Trp-339, Asp-340–Lys-370, Asn-371–Pro-405, Asn-406–Leu-440, and Lys-443–Lys-473. Residues Ile-478–Phe-554 are type E motif.

The protein belongs to the PPR family. PCMP-E subfamily.

This is Pentatricopeptide repeat-containing protein At4g38010 (PCMP-E45) from Arabidopsis thaliana (Mouse-ear cress).